Reading from the N-terminus, the 504-residue chain is UDP-N-acetylmuramoylalanine--D-glutamate ligase (504 aa).

Residue 129-135 coordinates ATP; it reads GTNGKTT.

The protein belongs to the MurCDEF family.

It is found in the cytoplasm. The enzyme catalyses UDP-N-acetyl-alpha-D-muramoyl-L-alanine + D-glutamate + ATP = UDP-N-acetyl-alpha-D-muramoyl-L-alanyl-D-glutamate + ADP + phosphate + H(+). The protein operates within cell wall biogenesis; peptidoglycan biosynthesis. Functionally, cell wall formation. Catalyzes the addition of glutamate to the nucleotide precursor UDP-N-acetylmuramoyl-L-alanine (UMA). This is UDP-N-acetylmuramoylalanine--D-glutamate ligase from Burkholderia pseudomallei (strain 668).